We begin with the raw amino-acid sequence, 337 residues long: B3 domain-containing protein REM16 (337 aa).

2 DNA-binding regions (TF-B3) span residues 22 to 116 and 223 to 321; these read TLHF…FDGQ and FLVF…FRGE.

The protein resides in the nucleus. The protein is B3 domain-containing protein REM16 (REM16) of Arabidopsis thaliana (Mouse-ear cress).